The sequence spans 295 residues: Light-independent protochlorophyllide reductase iron-sulfur ATP-binding protein (295 aa).

Residues 39–44 (GIGKST) and Lys68 each bind ATP. Ser43 is a binding site for Mg(2+). [4Fe-4S] cluster is bound by residues Cys124 and Cys158. ATP contacts are provided by residues 209 to 210 (NR) and 233 to 235 (PDL).

Belongs to the NifH/BchL/ChlL family. Homodimer. Protochlorophyllide reductase is composed of three subunits; BchL, BchN and BchB. [4Fe-4S] cluster is required as a cofactor.

It catalyses the reaction chlorophyllide a + oxidized 2[4Fe-4S]-[ferredoxin] + 2 ADP + 2 phosphate = protochlorophyllide a + reduced 2[4Fe-4S]-[ferredoxin] + 2 ATP + 2 H2O. The protein operates within porphyrin-containing compound metabolism; bacteriochlorophyll biosynthesis (light-independent). Component of the dark-operative protochlorophyllide reductase (DPOR) that uses Mg-ATP and reduced ferredoxin to reduce ring D of protochlorophyllide (Pchlide) to form chlorophyllide a (Chlide). This reaction is light-independent. The L component serves as a unique electron donor to the NB-component of the complex, and binds Mg-ATP. This chain is Light-independent protochlorophyllide reductase iron-sulfur ATP-binding protein, found in Rhodospirillum rubrum (strain ATCC 11170 / ATH 1.1.1 / DSM 467 / LMG 4362 / NCIMB 8255 / S1).